Here is a 211-residue protein sequence, read N- to C-terminus: Urease accessory protein UreG (211 aa).

11–18 (GPVGAGKT) contributes to the GTP binding site.

This sequence belongs to the SIMIBI class G3E GTPase family. UreG subfamily. In terms of assembly, homodimer. UreD, UreF and UreG form a complex that acts as a GTP-hydrolysis-dependent molecular chaperone, activating the urease apoprotein by helping to assemble the nickel containing metallocenter of UreC. The UreE protein probably delivers the nickel.

Its subcellular location is the cytoplasm. Its function is as follows. Facilitates the functional incorporation of the urease nickel metallocenter. This process requires GTP hydrolysis, probably effectuated by UreG. The protein is Urease accessory protein UreG of Actinobacillus pleuropneumoniae (Haemophilus pleuropneumoniae).